The primary structure comprises 213 residues: CASP-like protein UU2 (213 aa).

The interval methionine 1–proline 26 is disordered. The Cytoplasmic segment spans residues methionine 1–serine 53. A compositionally biased stretch (basic and acidic residues) spans aspartate 14–alanine 25. The chain crosses the membrane as a helical span at residues isoleucine 54–isoleucine 74. At alanine 75 to tyrosine 96 the chain is on the extracellular side. A glycan (N-linked (GlcNAc...) asparagine) is linked at asparagine 90. The helical transmembrane segment at leucine 97 to isoleucine 117 threads the bilayer. Over asparagine 118–threonine 137 the chain is Cytoplasmic. Residues tyrosine 138–leucine 158 form a helical membrane-spanning segment. Residues glutamine 159–alanine 184 are Extracellular-facing. The helical transmembrane segment at serine 185–leucine 205 threads the bilayer. Topologically, residues arginine 206 to lysine 213 are cytoplasmic.

It belongs to the Casparian strip membrane proteins (CASP) family. Homodimer and heterodimers.

It localises to the cell membrane. This chain is CASP-like protein UU2, found in Physcomitrium patens (Spreading-leaved earth moss).